Here is a 274-residue protein sequence, read N- to C-terminus: Large ribosomal subunit protein uL2 (274 aa).

A disordered region spans residues 223–274; that stretch reads VVMNPVDHPHGGGEGRTSGGRHPVSPWGVPTKGFKTRKNKRTDKYIVRRRTK. Residues 256–274 are compositionally biased toward basic residues; that stretch reads FKTRKNKRTDKYIVRRRTK.

Belongs to the universal ribosomal protein uL2 family. Part of the 50S ribosomal subunit. Forms a bridge to the 30S subunit in the 70S ribosome.

Functionally, one of the primary rRNA binding proteins. Required for association of the 30S and 50S subunits to form the 70S ribosome, for tRNA binding and peptide bond formation. It has been suggested to have peptidyltransferase activity; this is somewhat controversial. Makes several contacts with the 16S rRNA in the 70S ribosome. In Vibrio atlanticus (strain LGP32) (Vibrio splendidus (strain Mel32)), this protein is Large ribosomal subunit protein uL2.